Here is a 169-residue protein sequence, read N- to C-terminus: Putative glycine cleavage system H protein, mitochondrial (169 aa).

Residues 60-142 form the Lipoyl-binding domain; that stretch reads VGTVGITSYA…EEEGWICKIK (83 aa). An N6-lipoyllysine modification is found at Lys-101. Phosphoserine is present on Ser-131.

It belongs to the GcvH family. As to quaternary structure, component of the glycine decarboxylase complex (GDC), which is composed of four proteins: P, T, L and H. The cofactor is (R)-lipoate.

Its subcellular location is the mitochondrion. The glycine cleavage system (glycine decarboxylase complex) catalyzes the degradation of glycine. The H protein shuttles the methylamine group of glycine from the P protein to the T protein. The sequence is that of Putative glycine cleavage system H protein, mitochondrial (gcv3) from Schizosaccharomyces pombe (strain 972 / ATCC 24843) (Fission yeast).